The primary structure comprises 251 residues: Imidazole glycerol phosphate synthase subunit HisF (251 aa).

Residues Asp11 and Asp130 contribute to the active site.

Belongs to the HisA/HisF family. Heterodimer of HisH and HisF.

It is found in the cytoplasm. The enzyme catalyses 5-[(5-phospho-1-deoxy-D-ribulos-1-ylimino)methylamino]-1-(5-phospho-beta-D-ribosyl)imidazole-4-carboxamide + L-glutamine = D-erythro-1-(imidazol-4-yl)glycerol 3-phosphate + 5-amino-1-(5-phospho-beta-D-ribosyl)imidazole-4-carboxamide + L-glutamate + H(+). The protein operates within amino-acid biosynthesis; L-histidine biosynthesis; L-histidine from 5-phospho-alpha-D-ribose 1-diphosphate: step 5/9. IGPS catalyzes the conversion of PRFAR and glutamine to IGP, AICAR and glutamate. The HisF subunit catalyzes the cyclization activity that produces IGP and AICAR from PRFAR using the ammonia provided by the HisH subunit. The protein is Imidazole glycerol phosphate synthase subunit HisF of Chlorobium chlorochromatii (strain CaD3).